Consider the following 460-residue polypeptide: Argininosuccinate lyase (460 aa).

It belongs to the lyase 1 family. Argininosuccinate lyase subfamily.

The protein localises to the cytoplasm. The enzyme catalyses 2-(N(omega)-L-arginino)succinate = fumarate + L-arginine. It participates in amino-acid biosynthesis; L-arginine biosynthesis; L-arginine from L-ornithine and carbamoyl phosphate: step 3/3. The chain is Argininosuccinate lyase from Campylobacter jejuni subsp. doylei (strain ATCC BAA-1458 / RM4099 / 269.97).